The sequence spans 65 residues: Kunitz-type serine protease inhibitor IX (65 aa).

The region spanning 7-57 (CNLLPETGRCNALIPAFYYNSHLHKCQKFNYGGCGGNANNFKTIDECQRTC) is the BPTI/Kunitz inhibitor domain. Intrachain disulfides connect Cys7/Cys57, Cys16/Cys40, and Cys32/Cys53.

It belongs to the venom Kunitz-type family. As to expression, expressed by the venom gland.

The protein localises to the secreted. In terms of biological role, dual-function toxin that inhibits both serine proteases (high activity on chymotrypsin (Ki = 18 nM), and low activity on elastase) and voltage-gated potassium channels Kv1.3/KCNA3 (IC(50) = 120.0 nM). The chain is Kunitz-type serine protease inhibitor IX from Bungarus fasciatus (Banded krait).